Consider the following 140-residue polypeptide: Nucleoside diphosphate kinase (140 aa).

Residues Lys-9, Phe-57, Arg-85, Thr-91, Arg-102, and Asn-112 each coordinate ATP. Residue His-115 is the Pros-phosphohistidine intermediate of the active site.

This sequence belongs to the NDK family. Homotetramer. It depends on Mg(2+) as a cofactor.

The protein resides in the cytoplasm. It carries out the reaction a 2'-deoxyribonucleoside 5'-diphosphate + ATP = a 2'-deoxyribonucleoside 5'-triphosphate + ADP. The catalysed reaction is a ribonucleoside 5'-diphosphate + ATP = a ribonucleoside 5'-triphosphate + ADP. Functionally, major role in the synthesis of nucleoside triphosphates other than ATP. The ATP gamma phosphate is transferred to the NDP beta phosphate via a ping-pong mechanism, using a phosphorylated active-site intermediate. In Chlorobaculum parvum (strain DSM 263 / NCIMB 8327) (Chlorobium vibrioforme subsp. thiosulfatophilum), this protein is Nucleoside diphosphate kinase.